The primary structure comprises 423 residues: Histidine--tRNA ligase (423 aa).

The protein belongs to the class-II aminoacyl-tRNA synthetase family. Homodimer.

Its subcellular location is the cytoplasm. The enzyme catalyses tRNA(His) + L-histidine + ATP = L-histidyl-tRNA(His) + AMP + diphosphate + H(+). In Moorella thermoacetica (strain ATCC 39073 / JCM 9320), this protein is Histidine--tRNA ligase.